Consider the following 240-residue polypeptide: MSLNKTIYEGKAKAIIETEDLSIVIQHFKDDVTAFNKEKYEIIDGKGIINNHISAFIMEKLEKAEISTHFIKTLNEREQLVKKLKIIPLEVVVRNVAAGSFCKRFNIKEGERLASPIIDFFYKNDDLADPMVSENHILYFDWLSSKEMDEVKTTTLKINEILVHLFSNASIYLVDLKLEFGRLINDSTKIVLADEISPDNCRLWDKNTYKKLDKDVFRLNLGDLKEAYLEVAKRLSVKLG.

The protein belongs to the SAICAR synthetase family.

It carries out the reaction 5-amino-1-(5-phospho-D-ribosyl)imidazole-4-carboxylate + L-aspartate + ATP = (2S)-2-[5-amino-1-(5-phospho-beta-D-ribosyl)imidazole-4-carboxamido]succinate + ADP + phosphate + 2 H(+). The protein operates within purine metabolism; IMP biosynthesis via de novo pathway; 5-amino-1-(5-phospho-D-ribosyl)imidazole-4-carboxamide from 5-amino-1-(5-phospho-D-ribosyl)imidazole-4-carboxylate: step 1/2. The polypeptide is Phosphoribosylaminoimidazole-succinocarboxamide synthase (Wolbachia pipientis wMel).